The chain runs to 345 residues: S-adenosylmethionine:tRNA ribosyltransferase-isomerase (345 aa).

This sequence belongs to the QueA family. In terms of assembly, monomer.

It localises to the cytoplasm. The enzyme catalyses 7-aminomethyl-7-carbaguanosine(34) in tRNA + S-adenosyl-L-methionine = epoxyqueuosine(34) in tRNA + adenine + L-methionine + 2 H(+). Its pathway is tRNA modification; tRNA-queuosine biosynthesis. Its function is as follows. Transfers and isomerizes the ribose moiety from AdoMet to the 7-aminomethyl group of 7-deazaguanine (preQ1-tRNA) to give epoxyqueuosine (oQ-tRNA). This is S-adenosylmethionine:tRNA ribosyltransferase-isomerase from Shewanella pealeana (strain ATCC 700345 / ANG-SQ1).